Reading from the N-terminus, the 608-residue chain is RAS guanyl-releasing protein 2 (608 aa).

One can recognise an N-terminal Ras-GEF domain in the interval 4–126 (TLDLDKGCTV…SLIDIESVPT (123 aa)). Phosphoserine occurs at positions 116, 117, and 147. Positions 154-387 (EPMELAEHLT…YQLSLQREPR (234 aa)) constitute a Ras-GEF domain. The disordered stretch occupies residues 382-405 (LQREPRSKSSPTSPTSCTPPPRPP). 2 consecutive EF-hand domains span residues 426–461 (HIEK…FPYL) and 463–490 (AFGD…SSSV). Ca(2+) contacts are provided by Asp-439, Asp-441, Asp-443, His-445, Glu-450, Asp-468, Asn-470, Asp-472, Cys-474, and Glu-479. The Phorbol-ester/DAG-type zinc finger occupies 498-548 (VHNLQESNSLRPVACRHCKALILGIYKQGLKCRACGVNCHKQCKDRLSVEC). 2 positions are modified to phosphoserine: Ser-554 and Ser-575. The segment at 555-596 (VSLEGSAPSPSPTHTHHRAFSFSLPRPGRRSSRPPEIREEEV) is disordered.

It belongs to the RASGRP family. In terms of assembly, forms a signaling complex with RAP1 and BRAF. Interacts with F-actin. Interacts with RAP1. As to expression, expressed in striatal neurons (at protein level). Expressed in the hematopoietic system. Detected in olfactory structures and deep cortical layers of brain.

Its subcellular location is the cytoplasm. It is found in the cytosol. It localises to the cell membrane. The protein localises to the synapse. The protein resides in the synaptosome. Its subcellular location is the cell projection. It is found in the ruffle membrane. Functions as a calcium- and DAG-regulated nucleotide exchange factor specifically activating Rap through the exchange of bound GDP for GTP. May also activate other GTPases such as RRAS, RRAS2, NRAS, KRAS but not HRAS. Functions in aggregation of platelets and adhesion of T-lymphocytes and neutrophils probably through inside-out integrin activation. May function in the muscarinic acetylcholine receptor M1/CHRM1 signaling pathway. This is RAS guanyl-releasing protein 2 (Rasgrp2) from Rattus norvegicus (Rat).